Here is a 167-residue protein sequence, read N- to C-terminus: 3-isopropylmalate dehydratase small subunit (167 aa).

The protein belongs to the LeuD family. LeuD type 2 subfamily. In terms of assembly, heterodimer of LeuC and LeuD.

The enzyme catalyses (2R,3S)-3-isopropylmalate = (2S)-2-isopropylmalate. It participates in amino-acid biosynthesis; L-leucine biosynthesis; L-leucine from 3-methyl-2-oxobutanoate: step 2/4. Catalyzes the isomerization between 2-isopropylmalate and 3-isopropylmalate, via the formation of 2-isopropylmaleate. The protein is 3-isopropylmalate dehydratase small subunit of Sulfurimonas denitrificans (strain ATCC 33889 / DSM 1251) (Thiomicrospira denitrificans (strain ATCC 33889 / DSM 1251)).